Here is a 429-residue protein sequence, read N- to C-terminus: CinA-like protein (429 aa).

Belongs to the CinA family.

The sequence is that of CinA-like protein from Prochlorococcus marinus (strain MIT 9313).